The primary structure comprises 75 residues: RNA-binding protein KhpA (75 aa).

The KH domain occupies 29-75 (SIILELKVAPEDMGKVIGKQGRIAKAIRTVIKAAAVKENKRVVVEII).

This sequence belongs to the KhpA RNA-binding protein family. Forms a complex with KhpB.

It localises to the cytoplasm. Its function is as follows. A probable RNA chaperone. Forms a complex with KhpB which binds to cellular RNA and controls its expression. Plays a role in peptidoglycan (PG) homeostasis and cell length regulation. This is RNA-binding protein KhpA from Clostridium acetobutylicum (strain ATCC 824 / DSM 792 / JCM 1419 / IAM 19013 / LMG 5710 / NBRC 13948 / NRRL B-527 / VKM B-1787 / 2291 / W).